We begin with the raw amino-acid sequence, 296 residues long: Protoheme IX farnesyltransferase (296 aa).

Helical transmembrane passes span 11–31 (PGII…AAQG), 35–55 (YPLF…GCVF), 84–104 (VTLV…YVAA), 107–127 (LAMW…SLYM), 132–152 (VYGT…GYCA), 162–182 (LILL…IAIF), 208–228 (ITLY…GGYA), 229–249 (GYKY…MALS), and 264–284 (LFVF…VDSM).

It belongs to the UbiA prenyltransferase family. Protoheme IX farnesyltransferase subfamily.

The protein resides in the cell inner membrane. The catalysed reaction is heme b + (2E,6E)-farnesyl diphosphate + H2O = Fe(II)-heme o + diphosphate. It functions in the pathway porphyrin-containing compound metabolism; heme O biosynthesis; heme O from protoheme: step 1/1. Its function is as follows. Converts heme B (protoheme IX) to heme O by substitution of the vinyl group on carbon 2 of heme B porphyrin ring with a hydroxyethyl farnesyl side group. The sequence is that of Protoheme IX farnesyltransferase from Pectobacterium atrosepticum (strain SCRI 1043 / ATCC BAA-672) (Erwinia carotovora subsp. atroseptica).